Reading from the N-terminus, the 284-residue chain is Tropomyosin (284 aa).

Residues 1–41 form a disordered region; the sequence is MDAIKKKMQAMKLEKDNAVDRAETAEQQSRDAALRAEKAEE. Residues 1 to 284 adopt a coiled-coil conformation; it reads MDAIKKKMQA…DQTFSELTGY (284 aa). The span at 12-41 shows a compositional bias: basic and acidic residues; it reads KLEKDNAVDRAETAEQQSRDAALRAEKAEE.

The protein belongs to the tropomyosin family. In terms of assembly, homodimer.

Functionally, tropomyosin, in association with the troponin complex, plays a central role in the calcium dependent regulation of muscle contraction. The sequence is that of Tropomyosin from Haemaphysalis longicornis (Bush tick).